Here is a 116-residue protein sequence, read N- to C-terminus: ATP synthase lipid-binding protein, mitochondrial (116 aa).

A mitochondrion-targeting transit peptide spans 1 to 24 (MYCQRLALPLTRSLLASRAPLALR). A helical transmembrane segment spans residues 57–77 (VGVAGSGAGIGNVFGALVIGY). An N6,N6,N6-trimethyllysine modification is found at Lys84. Residues 92 to 112 (ILGFALSEAMGLFCLTMGFMI) traverse the membrane as a helical segment.

This sequence belongs to the ATPase C chain family. F-type ATPases have 2 components, CF(1) - the catalytic core - and CF(0) - the membrane proton channel. CF(1) has five subunits: alpha(3), beta(3), gamma(1), delta(1), epsilon(1). CF(0) has three main subunits: a, b and c. Trimethylated by ATPSCKMT at Lys-84. Methylation may be required for proper incorporation of the C subunit into the ATP synthase complex and mitochondrial respiration.

The protein resides in the mitochondrion membrane. In terms of biological role, mitochondrial membrane ATP synthase (F(1)F(0) ATP synthase or Complex V) produces ATP from ADP in the presence of a proton gradient across the membrane which is generated by electron transport complexes of the respiratory chain. F-type ATPases consist of two structural domains, F(1) - containing the extramembraneous catalytic core and F(0) - containing the membrane proton channel, linked together by a central stalk and a peripheral stalk. During catalysis, ATP synthesis in the catalytic domain of F(1) is coupled via a rotary mechanism of the central stalk subunits to proton translocation. Part of the complex F(0) domain. A homomeric c-ring of probably 10 subunits is part of the complex rotary element. The sequence is that of ATP synthase lipid-binding protein, mitochondrial from Caenorhabditis briggsae.